The sequence spans 496 residues: Cobyric acid synthase (496 aa).

The GATase cobBQ-type domain occupies 258-427; it reads TLTVAAIRLP…WHGLLDNDAL (170 aa). The active-site Nucleophile is C339. H419 is an active-site residue.

The protein belongs to the CobB/CobQ family. CobQ subfamily.

It participates in cofactor biosynthesis; adenosylcobalamin biosynthesis. Functionally, catalyzes amidations at positions B, D, E, and G on adenosylcobyrinic A,C-diamide. NH(2) groups are provided by glutamine, and one molecule of ATP is hydrogenolyzed for each amidation. This is Cobyric acid synthase from Mycolicibacterium smegmatis (strain ATCC 700084 / mc(2)155) (Mycobacterium smegmatis).